A 504-amino-acid polypeptide reads, in one-letter code: Signal recognition particle receptor FtsY (504 aa).

Disordered regions lie at residues 1–71 (MFNW…DDYL) and 116–135 (ESDQATATEADLPSPETEIT). Residues 308 to 315 (GVNGAGKT), 391 to 395 (DTAGR), and 455 to 458 (TKLD) each bind GTP.

Belongs to the GTP-binding SRP family. FtsY subfamily. In terms of assembly, part of the signal recognition particle protein translocation system, which is composed of SRP and FtsY.

It localises to the cell inner membrane. The protein resides in the cytoplasm. The catalysed reaction is GTP + H2O = GDP + phosphate + H(+). Functionally, involved in targeting and insertion of nascent membrane proteins into the cytoplasmic membrane. Acts as a receptor for the complex formed by the signal recognition particle (SRP) and the ribosome-nascent chain (RNC). This is Signal recognition particle receptor FtsY from Synechocystis sp. (strain ATCC 27184 / PCC 6803 / Kazusa).